Here is a 732-residue protein sequence, read N- to C-terminus: Conidiogenone synthase (732 aa).

Positions Met1–Val311 are terpene cyclase. Residue Asp97 coordinates Mg(2+). Residues Asp97, Arg169–Asp172, Asn213, Ser217–Glu221, and Arg307–Tyr308 contribute to the substrate site. Positions Asp97–Gln101 match the DDXXD 1 motif. Positions Asn213–Glu221 match the NSE/DTE motif. The segment at Asp312 to Lys732 is prenyltransferase. The segment at Lys348 to Asn370 is disordered. Residues Lys402, Arg405, and His434 each contribute to the isopentenyl diphosphate site. 2 residues coordinate Mg(2+): Asp441 and Asp445. Residues Asp441–Asp445 carry the DDXXD 2 motif. Arg450 is a dimethylallyl diphosphate binding site. Residue Arg451 participates in isopentenyl diphosphate binding. 6 residues coordinate dimethylallyl diphosphate: Lys529, Thr530, Gln565, Asn572, Lys582, and Lys592.

In the N-terminal section; belongs to the terpene synthase family. It in the C-terminal section; belongs to the FPP/GGPP synthase family. In terms of assembly, hexamer. The cofactor is Mg(2+).

It carries out the reaction isopentenyl diphosphate + (2E,6E)-farnesyl diphosphate = (2E,6E,10E)-geranylgeranyl diphosphate + diphosphate. The protein operates within secondary metabolite biosynthesis; terpenoid biosynthesis. In terms of biological role, bifunctional terpene synthase; part of the gene cluster that mediates the biosynthesis of conidiogenone, a diterpene known to induce the conidiation. The bifunctional terpene synthase PchDS converts isopentenyl diphosphate (IPP) and dimethylallyl diphosphate (DMAPP) into deoxyconidiogenol. The C-terminal prenyltransferase (PT) domain of PchDS catalyzes formation of GGPP, whereas the N-terminal terpene cyclase (TC) domain catalyzes the cyclization of GGPP into deoxyconidiogenol. The cytochrome P450 monooxygenase PchP450 then catalyzes two rounds of oxidation to furnish conidiogenone. This is Conidiogenone synthase from Penicillium rubens (strain ATCC 28089 / DSM 1075 / NRRL 1951 / Wisconsin 54-1255) (Penicillium chrysogenum).